We begin with the raw amino-acid sequence, 103 residues long: Urease subunit beta (103 aa).

It belongs to the urease beta subunit family. In terms of assembly, heterotrimer of UreA (gamma), UreB (beta) and UreC (alpha) subunits. Three heterotrimers associate to form the active enzyme.

The protein resides in the cytoplasm. It carries out the reaction urea + 2 H2O + H(+) = hydrogencarbonate + 2 NH4(+). The protein operates within nitrogen metabolism; urea degradation; CO(2) and NH(3) from urea (urease route): step 1/1. In Mycobacterium marinum (strain ATCC BAA-535 / M), this protein is Urease subunit beta.